Reading from the N-terminus, the 490-residue chain is Cytochrome P450 71B28 (490 aa).

The helical transmembrane segment at 1–21 threads the bilayer; sequence MSVFLCFLCLLPLILIFLKNL. Residue Cys-440 participates in heme binding.

This sequence belongs to the cytochrome P450 family. Requires heme as cofactor.

It localises to the membrane. The polypeptide is Cytochrome P450 71B28 (CYP71B28) (Arabidopsis thaliana (Mouse-ear cress)).